Reading from the N-terminus, the 349-residue chain is Probable dual-specificity RNA methyltransferase RlmN (349 aa).

Glu94 serves as the catalytic Proton acceptor. The Radical SAM core domain occupies 100-324 (YKTHTSICLS…NKNNVNTTIR (225 aa)). Cys107 and Cys335 form a disulfide bridge. Residues Cys114, Cys118, and Cys121 each contribute to the [4Fe-4S] cluster site. S-adenosyl-L-methionine-binding positions include 161-162 (GE), Ser193, 216-218 (SLH), and Asn292. Cys335 functions as the S-methylcysteine intermediate in the catalytic mechanism.

The protein belongs to the radical SAM superfamily. RlmN family. Requires [4Fe-4S] cluster as cofactor.

It is found in the cytoplasm. It catalyses the reaction adenosine(2503) in 23S rRNA + 2 reduced [2Fe-2S]-[ferredoxin] + 2 S-adenosyl-L-methionine = 2-methyladenosine(2503) in 23S rRNA + 5'-deoxyadenosine + L-methionine + 2 oxidized [2Fe-2S]-[ferredoxin] + S-adenosyl-L-homocysteine. The enzyme catalyses adenosine(37) in tRNA + 2 reduced [2Fe-2S]-[ferredoxin] + 2 S-adenosyl-L-methionine = 2-methyladenosine(37) in tRNA + 5'-deoxyadenosine + L-methionine + 2 oxidized [2Fe-2S]-[ferredoxin] + S-adenosyl-L-homocysteine. Specifically methylates position 2 of adenine 2503 in 23S rRNA and position 2 of adenine 37 in tRNAs. In Finegoldia magna (strain ATCC 29328 / DSM 20472 / WAL 2508) (Peptostreptococcus magnus), this protein is Probable dual-specificity RNA methyltransferase RlmN.